Here is a 211-residue protein sequence, read N- to C-terminus: Ribosome maturation factor RimM (211 aa).

One can recognise a PRC barrel domain in the interval 111-182 (PDAWYDHQLV…TLVVTPPLGL (72 aa)). Residues 184-211 (EEIPDETPTAEPTPAEAAEPAPEGDDAR) form a disordered region. Low complexity predominate over residues 189–204 (ETPTAEPTPAEAAEPA).

Belongs to the RimM family. As to quaternary structure, binds ribosomal protein uS19.

Its subcellular location is the cytoplasm. An accessory protein needed during the final step in the assembly of 30S ribosomal subunit, possibly for assembly of the head region. Essential for efficient processing of 16S rRNA. May be needed both before and after RbfA during the maturation of 16S rRNA. It has affinity for free ribosomal 30S subunits but not for 70S ribosomes. The sequence is that of Ribosome maturation factor RimM from Clavibacter michiganensis subsp. michiganensis (strain NCPPB 382).